Reading from the N-terminus, the 420-residue chain is Deoxyribodipyrimidine photo-lyase (420 aa).

The Photolyase/cryptochrome alpha/beta domain occupies 2–124 (GPLLVWHRGD…PLHLLPAPHL (123 aa)). The tract at residues 147 to 176 (APPLPPPEALPKGPEEGEIPREDPGLPLPE) is disordered. Residues 159 to 170 (GPEEGEIPREDP) show a composition bias toward basic and acidic residues. Residue Tyr197 coordinates FAD. Arg201 lines the DNA pocket. Residues 209–213 (GSRLS), Trp241, Arg248, Asn310, and 341–343 (DGD) contribute to the FAD site. Interaction with DNA stretches follow at residues 244-251 (ELLWRDFS) and 310-311 (NR). Gln373 is a DNA binding site.

It belongs to the DNA photolyase class-1 family. In terms of assembly, monomer. The cofactor is FAD.

The catalysed reaction is cyclobutadipyrimidine (in DNA) = 2 pyrimidine residues (in DNA).. In terms of biological role, involved in repair of UV radiation-induced DNA damage. Catalyzes the light-dependent monomerization (300-600 nm) of cyclobutyl pyrimidine dimers (in cis-syn configuration), which are formed between adjacent bases on the same DNA strand upon exposure to ultraviolet radiation. The sequence is that of Deoxyribodipyrimidine photo-lyase (phr) from Thermus thermophilus (strain ATCC 27634 / DSM 579 / HB8).